A 102-amino-acid chain; its full sequence is Acid shock protein (102 aa).

An N-terminal signal peptide occupies residues 1 to 21 (MKKVLALVVAAAMGLSSAAFA). Over residues 22–41 (AETATTPAPTATTTKAAPAK) the composition is skewed to low complexity. The propeptide occupies 22-58 (AETATTPAPTATTTKAAPAKTTHHKKQHKAAPAQKAQ). The interval 22 to 102 (AETATTPAPT…PAKPAAQPAA (81 aa)) is disordered. Basic residues predominate over residues 80–90 (AAKKHAGKHSH). Over residues 91–102 (QQPAKPAAQPAA) the composition is skewed to low complexity.

It belongs to the Asr family. In terms of processing, proteolytic processing gives rise to the active protein.

It localises to the periplasm. Its function is as follows. Required for growth and/or survival at acidic conditions. The chain is Acid shock protein from Escherichia coli (strain 55989 / EAEC).